Reading from the N-terminus, the 1073-residue chain is Probable nuclear hormone receptor HR38 (1073 aa).

Disordered stretches follow at residues 55–87 (NLNAPTHQQSHTSHLQHAQQHQTHQQHPLLPPP), 150–185 (TPAPPATEPRKIKPLGAGKLKVGKTDSNSDSNSNCD), 263–326 (TQTA…LVSP), 437–458 (ALHAQQQQQQQQQQQQQQQQHQ), 492–514 (KYNSSSGSSPQQASSSSTAAPTP), 529–579 (PPLS…NSGG), and 618–640 (GQQQQQQQQSYQQHNYNSHNGER). 3 stretches are compositionally biased toward low complexity: residues 59-82 (PTHQQSHTSHLQHAQQHQTHQQHP), 175-185 (DSNSDSNSNCD), and 263-277 (TQTASTTTTTSASAA). Residues 279–291 (HHQHHNHLLHQQH) show a composition bias toward basic residues. Low complexity-rich tracts occupy residues 292 to 326 (HNQQQQQQQQQQQQQQQQQQQEHLQQQHQQQLVSP), 441 to 458 (QQQQQQQQQQQQQQQQHQ), and 495 to 514 (SSSGSSPQQASSSSTAAPTP). Positions 619–636 (QQQQQQQQSYQQHNYNSH) are enriched in low complexity. The nuclear receptor DNA-binding region spans 741 to 816 (SQLCAVCGDT…VGMVKEVVRT (76 aa)). NR C4-type zinc fingers lie at residues 744–764 (CAVCGDTAACQHYGVRTCEGC) and 780–804 (CLADKNCPVDKRRRNRCQFCRFQKC). A disordered region spans residues 819–841 (LKGRRGRLPSKPKSPQESPPSPP). One can recognise an NR LBD domain in the interval 840–1070 (PPISLITALV…ALIENMFVTT (231 aa)).

The protein belongs to the nuclear hormone receptor family. NR4 subfamily. Forms a heterodimer with USP. In terms of tissue distribution, ubiquitously expressed in preblastoderm embryos, specifically in central nervous system and intestinal tract. Highly expressed in third instar larval imaginal disks and brain complexes, but not in ovaries.

The protein localises to the nucleus. Functionally, binds to NGFI-B response elements. Plays an important role in late stages of epidermal metamorphosis. This Drosophila melanogaster (Fruit fly) protein is Probable nuclear hormone receptor HR38 (Hr38).